The following is an 800-amino-acid chain: Phenylalanine--tRNA ligase beta subunit (800 aa).

The tRNA-binding domain occupies 39-154; it reads TKDIKNLVVG…EAQVPGTDAL (116 aa). One can recognise a B5 domain in the interval 408-483; it reads AFITPIDITA…RIYGYDDIPS (76 aa). Residues aspartate 461, aspartate 467, glutamate 470, and glutamate 471 each coordinate Mg(2+). The region spanning 708-800 is the FDX-ACB domain; the sequence is PRFPGMSRDI…ALIEQGAVIR (93 aa).

Belongs to the phenylalanyl-tRNA synthetase beta subunit family. Type 1 subfamily. Tetramer of two alpha and two beta subunits. Mg(2+) serves as cofactor.

The protein localises to the cytoplasm. It catalyses the reaction tRNA(Phe) + L-phenylalanine + ATP = L-phenylalanyl-tRNA(Phe) + AMP + diphosphate + H(+). The polypeptide is Phenylalanine--tRNA ligase beta subunit (Staphylococcus aureus (strain COL)).